Consider the following 532-residue polypeptide: Intercellular adhesion molecule 1 (532 aa).

Positions Met-1–Ala-27 are cleaved as a signal peptide. Residues Gln-28–Glu-480 are Extracellular-facing. Ig-like C2-type domains follow at residues Gly-41–Ala-103 and Gly-128–Arg-193. 3 disulfide bridges follow: Cys-48–Cys-92, Cys-52–Cys-96, and Cys-135–Cys-186. A Cell attachment site; atypical motif is present at residues Arg-152–Glu-154. 2 N-linked (GlcNAc...) asparagine glycosylation sites follow: Asn-202 and Asn-267. Ig-like C2-type domains follow at residues Asp-230–Gln-297 and Gly-325–Ala-378. Intrachain disulfides connect Cys-237-Cys-290 and Cys-332-Cys-371. N-linked (GlcNAc...) asparagine glycans are attached at residues Asn-385 and Asn-406. 3 disulfide bridges follow: Cys-403/Cys-419, Cys-419/Cys-457, and Cys-431/Cys-457. One can recognise an Ig-like C2-type 5 domain in the interval Asn-412–Gly-464. A helical transmembrane segment spans residues Phe-481–Tyr-503. Residues Asn-504 to Pro-532 lie on the Cytoplasmic side of the membrane. Residues Thr-521 and Thr-530 each carry the phosphothreonine modification.

Belongs to the immunoglobulin superfamily. ICAM family. Homodimer. Interacts with MUC1 and promotes cell aggregation in epithelial cells. Interacts with ARHGEF26/SGEF. Interacts (on T cell side) with CD81, CD247 and CD9 at immunological synapses between antigen-presenting cells and T cells. Monoubiquitinated, which is promoted by MARCH9 and leads to endocytosis.

The protein resides in the membrane. ICAM proteins are ligands for the leukocyte adhesion protein LFA-1 (integrin alpha-L/beta-2). During leukocyte trans-endothelial migration, ICAM1 engagement promotes the assembly of endothelial apical cups through ARHGEF26/SGEF and RHOG activation. The chain is Intercellular adhesion molecule 1 (ICAM1) from Gorilla gorilla gorilla (Western lowland gorilla).